The primary structure comprises 441 residues: MSPRPLRALLGAAAAALVSAAALAFPSQAAANDSPFYVNPNMSSAEWVRNNPNDPRTPVIRDRIASVPQGTWFAHHNPGQITGQVDALMSAAQAAGKIPILVVYNAPGRDCGNHSSGGAPSHSAYRSWIDEFAAGLKNRPAYIIVEPDLISLMSSCMQHVQQEVLETMAYAGKALKAGSSQARIYFDAGHSAWHSPAQMASWLQQADISNSAHGIATNTSNYRWTADEVAYAKAVLSAIGNPSLRAVIDTSRNGNGPAGNEWCDPSGRAIGTPSTTNTGDPMIDAFLWIKLPGEADGCIAGAGQFVPQAAYEMAIAAGGTNPNPNPNPTPTPTPTPTPPPGSSGACTATYTIANEWNDGFQATVTVTANQNITGWTVTWTFTDGQTITNAWNADVSTSGSSVTARNVGHNGTLSQGASTEFGFVGSKGNSNSVPTLTCAAS.

The tat-type signal signal peptide spans 1 to 31; sequence MSPRPLRALLGAAAAALVSAAALAFPSQAAA. The catalytic stretch occupies residues 32–320; it reads NDSPFYVNPN…YEMAIAAGGT (289 aa). Aspartate 110 is an active-site residue. Disulfide bonds link cysteine 111–cysteine 156 and cysteine 263–cysteine 298. The active-site Proton donor is aspartate 148. Aspartate 296 serves as the catalytic Nucleophile. Positions 317–343 are disordered; that stretch reads AGGTNPNPNPNPTPTPTPTPTPPPGSS. The segment at 321 to 340 is linker; sequence NPNPNPNPTPTPTPTPTPPP. Over residues 323-341 the composition is skewed to pro residues; it reads NPNPNPTPTPTPTPTPPPG. The 103-residue stretch at 339-441 folds into the CBM2 domain; it reads PPGSSGACTA…SVPTLTCAAS (103 aa). A disulfide bridge links cysteine 346 with cysteine 438.

Belongs to the glycosyl hydrolase 6 (cellulase B) family. As to quaternary structure, homodimer. In terms of processing, predicted to be exported by the Tat system. The position of the signal peptide cleavage has been experimentally proven.

It carries out the reaction Endohydrolysis of (1-&gt;4)-beta-D-glucosidic linkages in cellulose, lichenin and cereal beta-D-glucans.. The protein operates within glycan metabolism; cellulose degradation. The protein is Endoglucanase E-2 (celB) of Thermobifida fusca (Thermomonospora fusca).